Consider the following 309-residue polypeptide: Bombesin receptor-activated protein C6orf89 homolog (309 aa).

The Cytoplasmic portion of the chain corresponds to 1–59; it reads MGSSLSEPCIYDKLSESIDILRQSGYRYGMSEREIEKFIKQVLETNEPRREPPQFPILR. Residues 60 to 80 traverse the membrane as a helical segment; it reads ATVKFVVAVGVVLMAVLVFTY. Topologically, residues 81–309 are extracellular; sequence PQSPVLMGSV…QDVQCDSAVL (229 aa).

As to quaternary structure, homodimer.

It is found in the golgi apparatus membrane. The protein localises to the cytoplasm. Functionally, exhibits histone deacetylase (HDAC) enhancer properties. May play a role in progression through the cell cycle. The chain is Bombesin receptor-activated protein C6orf89 homolog from Danio rerio (Zebrafish).